A 65-amino-acid chain; its full sequence is STGKRNAGKLTVTDDVEADRDTDPDDKDPSVHNSWRTVDCGGVPCEFGCCRIIDGKEKCREIDCD.

Residues 1–33 form a disordered region; that stretch reads STGKRNAGKLTVTDDVEADRDTDPDDKDPSVHN. Residues 1–36 constitute a propeptide that is removed on maturation; it reads STGKRNAGKLTVTDDVEADRDTDPDDKDPSVHNSWR. Over residues 14 to 26 the composition is skewed to acidic residues; the sequence is DDVEADRDTDPDD. 3 disulfide bridges follow: cysteine 40–cysteine 50, cysteine 45–cysteine 59, and cysteine 49–cysteine 64.

In terms of processing, is not hydroxylated. Expressed by the venom duct.

It localises to the secreted. Its function is as follows. Probable toxin that inhibits ion channels. This chain is Conotoxin Am6.4, found in Conus amadis (Amadis cone).